Reading from the N-terminus, the 446-residue chain is ATP synthase subunit b-delta (446 aa).

Residues 1-168 (MSTFIGQLFG…PATADVDYPL (168 aa)) are ATP synthase subunit b. A helical transmembrane segment spans residues 4-24 (FIGQLFGFAVIVYLVWRFIVP). An ATP synthase subunit delta region spans residues 169-446 (LAKMRSASRR…LAAAEARLPD (278 aa)).

In the N-terminal section; belongs to the ATPase B chain family. It in the C-terminal section; belongs to the ATPase delta chain family. As to quaternary structure, F-type ATPases have 2 components, F(1) - the catalytic core - and F(0) - the membrane proton channel. F(1) has five subunits: alpha(3), beta(3), gamma(1), delta(1), epsilon(1). F(0) has three main subunits: a(1), b(2) and c(10-14). The alpha and beta chains form an alternating ring which encloses part of the gamma chain. F(1) is attached to F(0) by a central stalk formed by the gamma and epsilon chains, while a peripheral stalk is formed by the delta and b chains.

It localises to the cell membrane. Its function is as follows. F(1)F(0) ATP synthase produces ATP from ADP in the presence of a proton or sodium gradient. F-type ATPases consist of two structural domains, F(1) containing the extramembraneous catalytic core and F(0) containing the membrane proton channel, linked together by a central stalk and a peripheral stalk. During catalysis, ATP synthesis in the catalytic domain of F(1) is coupled via a rotary mechanism of the central stalk subunits to proton translocation. This fusion protein includes a component of the F(0) channel (subunit b) and of the F(1) subunit (subunit delta). Two copies of subunit b and one of delta together form the peripheral 'stator' stalk which links F(1) to F(0). The chain is ATP synthase subunit b-delta (atpFH) from Mycobacterium tuberculosis (strain CDC 1551 / Oshkosh).